Consider the following 248-residue polypeptide: Ras-related protein RSR1 (248 aa).

Position 10 to 17 (10 to 17) interacts with GTP; that stretch reads GAGGVGKS. The short motif at 32-40 is the Effector region element; sequence YDPTIEDSY. GTP-binding positions include 57-61 and 116-119; these read DTAGV and NKCD. The tract at residues 182–248 is disordered; the sequence is LQKQQQQQQQ…SSGSKFCTII (67 aa). Residues 184-214 show a composition bias toward low complexity; that stretch reads KQQQQQQQEQDAEGQQQQQKSGKSKSSATQK. Polar residues-rich tracts occupy residues 219–231 and 238–248; these read DGQT…LKQS and SSSGSKFCTII. Residue Cys245 is modified to Cysteine methyl ester. Cys245 carries S-geranylgeranyl cysteine lipidation. Residues 246–248 constitute a propeptide, removed in mature form; it reads TII.

Belongs to the small GTPase superfamily. Ras family.

The protein resides in the cell membrane. It carries out the reaction GTP + H2O = GDP + phosphate + H(+). With respect to regulation, alternates between an inactive form bound to GDP and an active form bound to GTP. Activated by a guanine nucleotide-exchange factor (GEF) and inactivated by a GTPase-activating protein (GAP). Its function is as follows. Ras-related protein which binds GDP/GTP and possesses intrinsic GTPase activity. Involved in both yeast and hypha development. In the yeast phase, it is required for normal (polar) bud site selection and is involved in cell morphogenesis; in the yeast-mycelial transition it is involved in germ tube emergence; and in the development of the hyphae it is involved in cell elongation. This Candida albicans (Yeast) protein is Ras-related protein RSR1 (RSR1).